The following is a 94-amino-acid chain: Co-chaperonin GroES (94 aa).

Belongs to the GroES chaperonin family. In terms of assembly, heptamer of 7 subunits arranged in a ring. Interacts with the chaperonin GroEL.

The protein resides in the cytoplasm. Functionally, together with the chaperonin GroEL, plays an essential role in assisting protein folding. The GroEL-GroES system forms a nano-cage that allows encapsulation of the non-native substrate proteins and provides a physical environment optimized to promote and accelerate protein folding. GroES binds to the apical surface of the GroEL ring, thereby capping the opening of the GroEL channel. The protein is Co-chaperonin GroES of Pediococcus pentosaceus (strain ATCC 25745 / CCUG 21536 / LMG 10740 / 183-1w).